A 280-amino-acid polypeptide reads, in one-letter code: Phosphonoacetaldehyde hydrolase (280 aa).

The active-site Nucleophile is D20. Residues D20 and A22 each coordinate Mg(2+). The Schiff-base intermediate with substrate role is filled by K61. D194 is a Mg(2+) binding site.

It belongs to the HAD-like hydrolase superfamily. PhnX family. Homodimer. Requires Mg(2+) as cofactor.

It carries out the reaction phosphonoacetaldehyde + H2O = acetaldehyde + phosphate + H(+). Its function is as follows. Involved in phosphonate degradation. The polypeptide is Phosphonoacetaldehyde hydrolase (Nitratidesulfovibrio vulgaris (strain DSM 19637 / Miyazaki F) (Desulfovibrio vulgaris)).